A 625-amino-acid chain; its full sequence is TORTIFOLIA1-like protein 4 (625 aa).

The disordered stretch occupies residues 1 to 34 (MSVHGRFPASPPISLSPSSSSTSPSSQSPSTPPD). Over residues 12–29 (PISLSPSSSSTSPSSQSP) the composition is skewed to low complexity. HEAT repeat units follow at residues 69–106 (DSFS…YHGD), 110–147 (PHLA…HVTR), 149–186 (PFAS…AATD), 190–227 (EQLR…AGGA), and 230–268 (KPVL…AEDL). The tract at residues 391-466 (SVDNKGPHFT…VKNCKDDVEE (76 aa)) is disordered. Basic and acidic residues-rich tracts occupy residues 404–413 (KSSEETEEKA), 420–434 (IIKH…EDSK), and 455–466 (DSVKNCKDDVEE). The residue at position 475 (Ser475) is a Phosphoserine. Residues 582 to 625 (GMRESTDTNNGQRGGSVFQKRSRRDQFQDCMHTTLQKPTTRLST) are disordered. Over residues 612-625 (MHTTLQKPTTRLST) the composition is skewed to polar residues.

This is TORTIFOLIA1-like protein 4 from Arabidopsis thaliana (Mouse-ear cress).